The primary structure comprises 162 residues: Small ribosomal subunit protein uS9 (162 aa).

The protein belongs to the universal ribosomal protein uS9 family.

This Parvibaculum lavamentivorans (strain DS-1 / DSM 13023 / NCIMB 13966) protein is Small ribosomal subunit protein uS9.